A 678-amino-acid polypeptide reads, in one-letter code: DNA ligase (678 aa).

NAD(+)-binding positions include 36-40 (DSEFD), 85-86 (SL), and glutamate 117. Lysine 119 (N6-AMP-lysine intermediate) is an active-site residue. Arginine 140, glutamate 177, lysine 294, and lysine 318 together coordinate NAD(+). 4 residues coordinate Zn(2+): cysteine 412, cysteine 415, cysteine 430, and cysteine 436. Residues 595–678 (IIDAPLLGKT…TWWQHYGNAV (84 aa)) form the BRCT domain.

Belongs to the NAD-dependent DNA ligase family. LigA subfamily. Mg(2+) serves as cofactor. Mn(2+) is required as a cofactor.

It catalyses the reaction NAD(+) + (deoxyribonucleotide)n-3'-hydroxyl + 5'-phospho-(deoxyribonucleotide)m = (deoxyribonucleotide)n+m + AMP + beta-nicotinamide D-nucleotide.. DNA ligase that catalyzes the formation of phosphodiester linkages between 5'-phosphoryl and 3'-hydroxyl groups in double-stranded DNA using NAD as a coenzyme and as the energy source for the reaction. It is essential for DNA replication and repair of damaged DNA. The chain is DNA ligase from Dichelobacter nodosus (strain VCS1703A).